The chain runs to 104 residues: L-rhamnose mutarotase (104 aa).

Tyrosine 18 contributes to the substrate binding site. The Proton donor role is filled by histidine 22. Substrate-binding positions include tyrosine 41 and 76–77; that span reads WW.

Belongs to the rhamnose mutarotase family. As to quaternary structure, homodimer.

The protein resides in the cytoplasm. The catalysed reaction is alpha-L-rhamnose = beta-L-rhamnose. It functions in the pathway carbohydrate metabolism; L-rhamnose metabolism. Functionally, involved in the anomeric conversion of L-rhamnose. The protein is L-rhamnose mutarotase of Shouchella clausii (strain KSM-K16) (Alkalihalobacillus clausii).